A 250-amino-acid chain; its full sequence is ATP synthase subunit a (250 aa).

6 helical membrane-spanning segments follow: residues 26–46 (FTNA…FLYL), 84–104 (FFPM…LGMV), 114–134 (IIVT…YGFY), 143–163 (LFVP…IEII), 193–213 (FVAS…LPLI), and 216–236 (VALT…FAVL).

Belongs to the ATPase A chain family. As to quaternary structure, F-type ATPases have 2 components, CF(1) - the catalytic core - and CF(0) - the membrane proton channel. CF(1) has five subunits: alpha(3), beta(3), gamma(1), delta(1), epsilon(1). CF(0) has three main subunits: a(1), b(2) and c(9-12). The alpha and beta chains form an alternating ring which encloses part of the gamma chain. CF(1) is attached to CF(0) by a central stalk formed by the gamma and epsilon chains, while a peripheral stalk is formed by the delta and b chains.

The protein resides in the cell inner membrane. Its function is as follows. Key component of the proton channel; it plays a direct role in the translocation of protons across the membrane. In Sinorhizobium medicae (strain WSM419) (Ensifer medicae), this protein is ATP synthase subunit a.